The following is a 134-amino-acid chain: Small ribosomal subunit protein uS11 (134 aa).

The interval 1–24 is disordered; the sequence is MATKMAGVKRAGRKRKERKNIERG.

The protein belongs to the universal ribosomal protein uS11 family. In terms of assembly, part of the 30S ribosomal subunit. Interacts with proteins S7 and S18. Binds to IF-3.

Functionally, located on the platform of the 30S subunit, it bridges several disparate RNA helices of the 16S rRNA. Forms part of the Shine-Dalgarno cleft in the 70S ribosome. The protein is Small ribosomal subunit protein uS11 of Acetivibrio thermocellus (strain ATCC 27405 / DSM 1237 / JCM 9322 / NBRC 103400 / NCIMB 10682 / NRRL B-4536 / VPI 7372) (Clostridium thermocellum).